Here is a 179-residue protein sequence, read N- to C-terminus: Large ribosomal subunit protein uL5 (179 aa).

Belongs to the universal ribosomal protein uL5 family. In terms of assembly, part of the 50S ribosomal subunit; part of the 5S rRNA/L5/L18/L25 subcomplex. Contacts the 5S rRNA and the P site tRNA. Forms a bridge to the 30S subunit in the 70S ribosome.

This is one of the proteins that bind and probably mediate the attachment of the 5S RNA into the large ribosomal subunit, where it forms part of the central protuberance. In the 70S ribosome it contacts protein S13 of the 30S subunit (bridge B1b), connecting the 2 subunits; this bridge is implicated in subunit movement. Contacts the P site tRNA; the 5S rRNA and some of its associated proteins might help stabilize positioning of ribosome-bound tRNAs. The protein is Large ribosomal subunit protein uL5 of Nitrosospira multiformis (strain ATCC 25196 / NCIMB 11849 / C 71).